Here is a 206-residue protein sequence, read N- to C-terminus: Putative apoptosis inhibitor 021L (206 aa).

Residues 95-105 (TSKSPVSNQPS) show a composition bias toward polar residues. The tract at residues 95-114 (TSKSPVSNQPSPEEDEPIPD) is disordered. An RING-type zinc finger spans residues 157 to 195 (CVVCQANVRNVVFVPCNHLATCISCSANPLMPKKCPMCR).

The protein belongs to the IIV-6 193R family.

Its function is as follows. Plays a role early in infection by preventing host cell apoptosis. This chain is Putative apoptosis inhibitor 021L, found in Aedes vexans (Inland floodwater mosquito).